We begin with the raw amino-acid sequence, 793 residues long: Coiled-coil domain-containing protein 175 (793 aa).

5 coiled-coil regions span residues 131 to 163 (EINT…NEAL), 205 to 377 (KRED…VLSE), 431 to 535 (KTVY…MLMK), 562 to 679 (LPQL…KYRE), and 716 to 745 (LVDN…QHVS).

The chain is Coiled-coil domain-containing protein 175 (CCDC175) from Homo sapiens (Human).